The chain runs to 214 residues: UPF0690 protein C1orf52 homolog (214 aa).

2 disordered regions span residues 1-66 (MSDE…SVSK) and 81-214 (DSRA…QCLD). Low complexity predominate over residues 32-44 (PEATASSAPAEPQ). Basic and acidic residues-rich tracts occupy residues 49 to 61 (RAAE…DELF) and 81 to 97 (DSRA…EFKV). A compositionally biased stretch (acidic residues) spans 152–165 (EEEEEEQQPDSDDD). Ser-162 is subject to Phosphoserine. 2 stretches are compositionally biased toward basic and acidic residues: residues 179-192 (VETF…KRDI) and 200-214 (NFVE…QCLD).

It belongs to the UPF0690 family.

This is UPF0690 protein C1orf52 homolog from Danio rerio (Zebrafish).